Reading from the N-terminus, the 450-residue chain is Divalent metal cation transporter MntH (450 aa).

Transmembrane regions (helical) follow at residues 34–54 (LSFL…GNWI), 61–81 (AQYG…AMLL), 108–128 (IAII…IAEV), 141–161 (IPLI…LFIM), 170–190 (AIVG…VYIS), 212–232 (GILY…NLYL), 263–283 (IQLS…ASLF), 305–325 (PVLG…ALLA), 361–381 (SLAV…AAKI), 383–403 (QLLV…LIPL), and 422–442 (VNII…YLIV).

The protein belongs to the NRAMP family.

Its subcellular location is the cell membrane. In terms of biological role, h(+)-stimulated, divalent metal cation uptake system. This chain is Divalent metal cation transporter MntH, found in Staphylococcus aureus (strain bovine RF122 / ET3-1).